Consider the following 315-residue polypeptide: Peroxidase 1 (315 aa).

The first 21 residues, 1–21 (MASSSYTSLLVLVALVTAASA), serve as a signal peptide directing secretion. Position 22 is a pyrrolidone carboxylic acid (Q22). 4 cysteine pairs are disulfide-bonded: C32/C107, C65/C70, C113/C310, and C193/C219. The Proton acceptor role is filled by H63. Ca(2+) contacts are provided by D64, V67, G69, D71, and S73. Residue P155 coordinates substrate. N158 is a glycosylation site (N-linked (GlcNAc...) asparagine). A heme b-binding site is contributed by H186. Position 187 (T187) interacts with Ca(2+). D234, T237, and D242 together coordinate Ca(2+). Residue N265 is glycosylated (N-linked (GlcNAc...) asparagine).

Belongs to the peroxidase family. Classical plant (class III) peroxidase subfamily. Ca(2+) is required as a cofactor. The cofactor is heme b.

It localises to the secreted. The catalysed reaction is 2 a phenolic donor + H2O2 = 2 a phenolic radical donor + 2 H2O. Functionally, removal of H(2)O(2), oxidation of toxic reductants, biosynthesis and degradation of lignin, suberization, auxin catabolism, response to environmental stresses such as wounding, pathogen attack and oxidative stress. These functions might be dependent on each isozyme/isoform in each plant tissue. Involved in defense response to powdery meldew fungus. This chain is Peroxidase 1, found in Hordeum vulgare (Barley).